The primary structure comprises 229 residues: Putative N-acetylmannosamine-6-phosphate 2-epimerase (229 aa).

It belongs to the NanE family.

The enzyme catalyses an N-acyl-D-glucosamine 6-phosphate = an N-acyl-D-mannosamine 6-phosphate. It functions in the pathway amino-sugar metabolism; N-acetylneuraminate degradation; D-fructose 6-phosphate from N-acetylneuraminate: step 3/5. Functionally, converts N-acetylmannosamine-6-phosphate (ManNAc-6-P) to N-acetylglucosamine-6-phosphate (GlcNAc-6-P). This is Putative N-acetylmannosamine-6-phosphate 2-epimerase from Shigella flexneri serotype 5b (strain 8401).